A 294-amino-acid polypeptide reads, in one-letter code: Mitochondrial HMG-box protein CIM1 (294 aa).

The transit peptide at 1–90 (MKATLLLKAQ…RLYYASFCQS (90 aa)) directs the protein to the mitochondrion. The segment at 27–102 (NRTPYTAFQY…IDILNVSKIE (76 aa)) is HMG-box A. An HMG-box B region spans residues 110 to 258 (PIPAMSEYLL…IQILQKNMDI (149 aa)).

Its subcellular location is the mitochondrion matrix. Its function is as follows. Mitochondrial HMG-box protein that limits the copy number of mitochondrial DNA (mtDNA), antagonizing HMG-box containing protein ABF2, a mtDNA packaging factor. The polypeptide is Mitochondrial HMG-box protein CIM1 (Saccharomyces cerevisiae (strain ATCC 204508 / S288c) (Baker's yeast)).